Here is a 1551-residue protein sequence, read N- to C-terminus: ABC-type transporter phomO (1551 aa).

The next 7 helical transmembrane spans lie at 34–54 (LYFE…LLAA), 110–130 (CTAG…CTTV), 139–159 (SVPA…LAHF), 172–192 (SSSL…APLV), 202–222 (GSAL…LIAV), 314–334 (LGLY…FTLA), and 358–378 (GLIG…GWYW). The 274-residue stretch at 326 to 599 (LCLAGFTLAQ…LLQIIPSFGA (274 aa)) folds into the ABC transmembrane type-1 1 domain. N384 is a glycosylation site (N-linked (GlcNAc...) asparagine). The next 4 helical transmembrane spans lie at 428–448 (LAYA…TWML), 452–472 (VGPP…ASTY), 535–555 (LIVG…VLVF), and 577–597 (LIWI…IPSF). One can recognise an ABC transporter 1 domain in the interval 645-861 (IHNSSFSYTD…VEDENGDVDN (217 aa)). An N-linked (GlcNAc...) asparagine glycan is attached at N647. 678-685 (GPAGCGKS) is an ATP binding site. Residue N721 is glycosylated (N-linked (GlcNAc...) asparagine). Residues 843 to 889 (YQFPPSQADVEDENGDVDNGAENTRPRESSHTTEAQSGPPEPKSKPT) are disordered. 4 helical membrane-spanning segments follow: residues 903–923 (SIGF…AFCL), 959–979 (VLPL…IVPL), 1027–1044 (LFNT…VILI), and 1137–1157 (LVLN…AVGL). Residues 910-1199 (VLFIGGGIIF…LLTAWTSLET (290 aa)) form the ABC transmembrane type-1 2 domain. N1179 is a glycosylation site (N-linked (GlcNAc...) asparagine). Residues 1219–1228 (DVLVRPDSLD) show a composition bias toward basic and acidic residues. The tract at residues 1219–1296 (DVLVRPDSLD…HEATTITTTS (78 aa)) is disordered. Acidic residues predominate over residues 1259-1270 (YDDDDESDENTD). The ABC transporter 2 domain occupies 1287–1535 (HEATTITTTS…SDIFAFFGRS (249 aa)). Residue 1323 to 1330 (GRTGSGKS) coordinates ATP. N1486 carries an N-linked (GlcNAc...) asparagine glycan.

It belongs to the ABC transporter superfamily. ABCC family. Conjugate transporter (TC 3.A.1.208) subfamily.

The protein resides in the membrane. In terms of biological role, ABC-type transporter; part of the gene cluster that mediates the biosynthesis of the phomopsins, a group of hexapeptide mycotoxins which infects lupins and causes lupinosis disease in livestock. This Diaporthe leptostromiformis (Lupinosis disease fungus) protein is ABC-type transporter phomO.